Consider the following 427-residue polypeptide: UDP-N-acetylglucosamine 1-carboxyvinyltransferase (427 aa).

22–23 serves as a coordination point for phosphoenolpyruvate; sequence KN. Position 92 (R92) interacts with UDP-N-acetyl-alpha-D-glucosamine. Residue D116 is the Proton donor of the active site. UDP-N-acetyl-alpha-D-glucosamine is bound by residues D312 and M334.

Belongs to the EPSP synthase family. MurA subfamily.

The protein resides in the cytoplasm. It carries out the reaction phosphoenolpyruvate + UDP-N-acetyl-alpha-D-glucosamine = UDP-N-acetyl-3-O-(1-carboxyvinyl)-alpha-D-glucosamine + phosphate. The protein operates within cell wall biogenesis; peptidoglycan biosynthesis. Functionally, cell wall formation. Adds enolpyruvyl to UDP-N-acetylglucosamine. The chain is UDP-N-acetylglucosamine 1-carboxyvinyltransferase from Borrelia garinii subsp. bavariensis (strain ATCC BAA-2496 / DSM 23469 / PBi) (Borreliella bavariensis).